We begin with the raw amino-acid sequence, 314 residues long: Olfactory receptor 1E2 (314 aa).

Residues 1-25 are Extracellular-facing; the sequence is MMGQNQTSISDFLLLGLPIQPEQQN. A glycan (N-linked (GlcNAc...) asparagine) is linked at Asn5. A helical transmembrane segment spans residues 26–49; sequence LCYALFLAMYLTTLLGNLLIIVLI. At 50–57 the chain is on the cytoplasmic side; that stretch reads RLDSHLHT. The helical transmembrane segment at 58-79 threads the bilayer; sequence PMYLFLSNLSFSDLCFSSVTIP. Residues 80–100 are Extracellular-facing; the sequence is KLLQNMQNQDPSIPYADCLTQ. Cysteines 97 and 189 form a disulfide. The helical transmembrane segment at 101-120 threads the bilayer; that stretch reads MHFFLLFGDLESFLLVAMAY. Over 121–139 the chain is Cytoplasmic; that stretch reads DRYVAICFPLHYTAIMSPM. Residues 140-158 form a helical membrane-spanning segment; sequence LCLSVVALSWVLTTFHAML. The Extracellular portion of the chain corresponds to 159–196; it reads HTLLMARLCFCADNVIPHFFCDMSALLKLACSDTRVNE. Residues 197–219 form a helical membrane-spanning segment; it reads WVIFIMGGLIVVIPFLLILGSYA. The Cytoplasmic segment spans residues 220–236; that stretch reads RIVSSILKVPSFKGICK. Residues 237-260 form a helical membrane-spanning segment; the sequence is ALSTCGSHLSVVSLFYGTVIGLYL. Over 261–272 the chain is Extracellular; that stretch reads CPSANSSTLKDT. An N-linked (GlcNAc...) asparagine glycan is attached at Asn265. Residues 273–292 form a helical membrane-spanning segment; sequence VMAMMYTVVTPMLNPFIYSL. Topologically, residues 293–314 are cytoplasmic; the sequence is RNRDMKGALERVICKRKNPFLL.

It belongs to the G-protein coupled receptor 1 family.

It localises to the cell membrane. Functionally, odorant receptor. The sequence is that of Olfactory receptor 1E2 (OR1E2) from Pan troglodytes (Chimpanzee).